Here is a 66-residue protein sequence, read N- to C-terminus: Large ribosomal subunit protein uL29 (66 aa).

This sequence belongs to the universal ribosomal protein uL29 family.

This is Large ribosomal subunit protein uL29 from Bacillus mycoides (strain KBAB4) (Bacillus weihenstephanensis).